The following is a 122-amino-acid chain: Large ribosomal subunit protein uL14 (122 aa).

The protein belongs to the universal ribosomal protein uL14 family. As to quaternary structure, part of the 50S ribosomal subunit. Forms a cluster with proteins L3 and L19. In the 70S ribosome, L14 and L19 interact and together make contacts with the 16S rRNA in bridges B5 and B8.

Functionally, binds to 23S rRNA. Forms part of two intersubunit bridges in the 70S ribosome. The protein is Large ribosomal subunit protein uL14 of Hyphomonas neptunium (strain ATCC 15444).